The following is a 235-amino-acid chain: Cytidylate kinase (235 aa).

Residue 16-24 (GPAASGKST) coordinates ATP.

This sequence belongs to the cytidylate kinase family. Type 1 subfamily.

It localises to the cytoplasm. It carries out the reaction CMP + ATP = CDP + ADP. The catalysed reaction is dCMP + ATP = dCDP + ADP. This chain is Cytidylate kinase, found in Chloroherpeton thalassium (strain ATCC 35110 / GB-78).